The primary structure comprises 79 residues: D-alanyl carrier protein (79 aa).

A Carrier domain is found at 1–77 (MDVKAEVIEI…KIVEGVTELR (77 aa)). An O-(pantetheine 4'-phosphoryl)serine modification is found at S35.

It belongs to the DltC family. 4'-phosphopantetheine is transferred from CoA to a specific serine of apo-DCP.

It localises to the cytoplasm. Its pathway is cell wall biogenesis; lipoteichoic acid biosynthesis. In terms of biological role, carrier protein involved in the D-alanylation of lipoteichoic acid (LTA). The loading of thioester-linked D-alanine onto DltC is catalyzed by D-alanine--D-alanyl carrier protein ligase DltA. The DltC-carried D-alanyl group is further transferred to cell membrane phosphatidylglycerol (PG) by forming an ester bond, probably catalyzed by DltD. D-alanylation of LTA plays an important role in modulating the properties of the cell wall in Gram-positive bacteria, influencing the net charge of the cell wall. This chain is D-alanyl carrier protein, found in Streptococcus gordonii (strain Challis / ATCC 35105 / BCRC 15272 / CH1 / DL1 / V288).